Consider the following 467-residue polypeptide: MTIAQEPTALNFECETGNYHTFCPISCVAWLYQKIEDSFFLVIGTKTCGYFLQNAMGVMIFAEPRYAMAELEEGDISAQLNDYAELKRLCEQIKRDRNPSVIVWIGTCTTEIIKMDLEGLAPKLEGELGIPIVVARANGLDYAFTQGEDTVLAAMAHRCPDKAPVAEAEKNERNAVQKLLNFGKKKELVAQEESEYVDHPPLVLFGSLPDPVVTQLTLELKKQGIKVSGWLPAKRFTELPVLEEGYYVAGVNPFLSRTATTLMRRRKCKLIGAPFPIGPDGTRAWIEKICSVFGITPQGLDEREAQIWAGLEDYVKLIRGKSVFFMGDNLLEVSLARFLVRCGMTVQEVGIPYMDKRYQAAELAMLEKACQEMGVPSPKMVEKPDNYNQVQRIYDLKPDLVITGMAHANPLEARGINTKWSVEFTFAQIHGFTNARDILELVTRPLRRNNNLKDLGWDKLVREEAKI.

3 residues coordinate [4Fe-4S] cluster: Cys23, Cys48, and Cys108.

The protein belongs to the BchN/ChlN family. Protochlorophyllide reductase is composed of three subunits; ChlL, ChlN and ChlB. Forms a heterotetramer of two ChlB and two ChlN subunits. [4Fe-4S] cluster is required as a cofactor.

The enzyme catalyses chlorophyllide a + oxidized 2[4Fe-4S]-[ferredoxin] + 2 ADP + 2 phosphate = protochlorophyllide a + reduced 2[4Fe-4S]-[ferredoxin] + 2 ATP + 2 H2O. It functions in the pathway porphyrin-containing compound metabolism; chlorophyll biosynthesis (light-independent). Its function is as follows. Component of the dark-operative protochlorophyllide reductase (DPOR) that uses Mg-ATP and reduced ferredoxin to reduce ring D of protochlorophyllide (Pchlide) to form chlorophyllide a (Chlide). This reaction is light-independent. The NB-protein (ChlN-ChlB) is the catalytic component of the complex. The protein is Light-independent protochlorophyllide reductase subunit N of Trichormus variabilis (strain ATCC 29413 / PCC 7937) (Anabaena variabilis).